A 527-amino-acid polypeptide reads, in one-letter code: Bifunctional purine biosynthesis protein PurH (527 aa).

An MGS-like domain is found at 1–149 (MTADLLPVRR…KNFARVAVAT (149 aa)).

Belongs to the PurH family.

It carries out the reaction (6R)-10-formyltetrahydrofolate + 5-amino-1-(5-phospho-beta-D-ribosyl)imidazole-4-carboxamide = 5-formamido-1-(5-phospho-D-ribosyl)imidazole-4-carboxamide + (6S)-5,6,7,8-tetrahydrofolate. The catalysed reaction is IMP + H2O = 5-formamido-1-(5-phospho-D-ribosyl)imidazole-4-carboxamide. The protein operates within purine metabolism; IMP biosynthesis via de novo pathway; 5-formamido-1-(5-phospho-D-ribosyl)imidazole-4-carboxamide from 5-amino-1-(5-phospho-D-ribosyl)imidazole-4-carboxamide (10-formyl THF route): step 1/1. It functions in the pathway purine metabolism; IMP biosynthesis via de novo pathway; IMP from 5-formamido-1-(5-phospho-D-ribosyl)imidazole-4-carboxamide: step 1/1. This Stenotrophomonas maltophilia (strain K279a) protein is Bifunctional purine biosynthesis protein PurH.